Consider the following 421-residue polypeptide: 3-phosphoshikimate 1-carboxyvinyltransferase (421 aa).

Residues lysine 20, serine 21, and arginine 25 each contribute to the 3-phosphoshikimate site. Lysine 20 serves as a coordination point for phosphoenolpyruvate. Residues glycine 90 and arginine 117 each coordinate phosphoenolpyruvate. Residues serine 162, serine 163, glutamine 164, serine 190, aspartate 304, and lysine 331 each contribute to the 3-phosphoshikimate site. Glutamine 164 provides a ligand contact to phosphoenolpyruvate. The Proton acceptor role is filled by aspartate 304. Residues arginine 335 and arginine 376 each contribute to the phosphoenolpyruvate site.

This sequence belongs to the EPSP synthase family. As to quaternary structure, monomer.

Its subcellular location is the cytoplasm. It catalyses the reaction 3-phosphoshikimate + phosphoenolpyruvate = 5-O-(1-carboxyvinyl)-3-phosphoshikimate + phosphate. It functions in the pathway metabolic intermediate biosynthesis; chorismate biosynthesis. In terms of biological role, catalyzes the transfer of the enolpyruvyl moiety of phosphoenolpyruvate (PEP) to the 5-hydroxyl of shikimate-3-phosphate (S3P) to produce enolpyruvyl shikimate-3-phosphate and inorganic phosphate. In Methanothrix thermoacetophila (strain DSM 6194 / JCM 14653 / NBRC 101360 / PT) (Methanosaeta thermophila), this protein is 3-phosphoshikimate 1-carboxyvinyltransferase.